The chain runs to 498 residues: Putative ABC transporter ATP-binding protein MM_2387 (498 aa).

2 consecutive ABC transporter domains span residues 2 to 242 (IELR…TSKS) and 258 to 490 (ISIK…VEEK). Residues 36–43 (GHSAAGKT) and 290–297 (GENGSGKT) contribute to the ATP site.

It belongs to the ABC transporter superfamily.

Its subcellular location is the cell membrane. In terms of biological role, probably part of an ABC transporter complex. Responsible for energy coupling to the transport system. The protein is Putative ABC transporter ATP-binding protein MM_2387 of Methanosarcina mazei (strain ATCC BAA-159 / DSM 3647 / Goe1 / Go1 / JCM 11833 / OCM 88) (Methanosarcina frisia).